Consider the following 214-residue polypeptide: Fruiting body protein SC14 (214 aa).

The N-terminal stretch at 1-18 (MKLNIAILLAALAATASA) is a signal peptide. Asparagine 61 and asparagine 144 each carry an N-linked (GlcNAc...) asparagine glycan. The SCP domain occupies 72–195 (LTAHNDERAQ…KSLWYYVCNY (124 aa)).

The protein belongs to the CRISP family.

The protein localises to the secreted. The protein is Fruiting body protein SC14 (SC14) of Schizophyllum commune (Split gill fungus).